A 106-amino-acid polypeptide reads, in one-letter code: UPF0473 protein LCABL_08490 (106 aa).

It belongs to the UPF0473 family.

This chain is UPF0473 protein LCABL_08490, found in Lacticaseibacillus casei (strain BL23) (Lactobacillus casei).